The chain runs to 315 residues: Protein sprouty homolog 2 (315 aa).

The segment covering 1 to 15 (MEARAQSGNGSQPLL) has biased composition (polar residues). The disordered stretch occupies residues 1–140 (MEARAQSGNG…SEQRLLGSSF (140 aa)). Positions 20 to 32 (DGGRPRGEPDPRD) are enriched in basic and acidic residues. Residues 108–140 (SRSISTVSSGSRSSTRTSTSSSSSEQRLLGSSF) are compositionally biased toward low complexity. Residues 118–315 (SRSSTRTSTS…VPRRNFEKPT (198 aa)) form a required for interaction with CAV1 region. The 115-residue stretch at 177 to 291 (RCEDCGKCKC…CYDRVNRPGC (115 aa)) folds into the SPR domain. The segment at 178–315 (CEDCGKCKCK…VPRRNFEKPT (138 aa)) is required for interaction with TESK1.

It belongs to the sprouty family. Forms heterodimers with SPRY1. Forms a tripartite complex containing GAB1, METTL13 and SPRY2. Within the complex interacts with METTL13. Interacts with RAF1. Interacts (via C-terminus) with TESK1 (via C-terminus); the interaction disrupts SPRY2 interaction with GRB2, potentially via disruption of SPRY2 serine dephosphorylation. Interacts with PPP2R1A/PP2A-A and PPP2CA/PP2A-C; the interaction with PPP2CA/PP2A-C is inhibited by interaction with TESK1, possibly by vesicular sequestration of SPRY2. Inhibition of the interaction with the serine/threonine-protein phosphatase 2A (PP2A) holoenzyme results in loss of PP2A-mediated dephosphorylation, resulting in the loss of SPRY2 interaction with GRB2. Interacts with GRB2. Interacts with CBL/C-CBL; the interaction inhibits CBL-mediated ubiquitination of EGFR. Interacts (via C-terminus) with CAV1 (via C-terminus). Cleaved at Pro-144 by the prolyl endopeptidase FAP (seprase) activity (in vitro).

The protein localises to the cytoplasm. Its subcellular location is the cytoskeleton. The protein resides in the cell projection. It localises to the ruffle membrane. Its function is as follows. Antagonist of fibroblast growth factor (FGF) pathways via inhibition of FGF-mediated phosphorylation of ERK1/2. Thereby acts as an antagonist of FGF-induced retinal lens fiber differentiation, may inhibit limb bud outgrowth and may negatively modulate respiratory organogenesis. Inhibits TGFB-induced epithelial-to-mesenchymal transition in retinal lens epithelial cells. Inhibits CBL/C-CBL-mediated EGFR ubiquitination. This chain is Protein sprouty homolog 2 (SPRY2), found in Pongo abelii (Sumatran orangutan).